Consider the following 175-residue polypeptide: Clathrin-associated protein AP-3 complex component APS3 (175 aa).

The protein belongs to the adaptor complexes small subunit family. In terms of assembly, adaptor protein complex 3 (AP-3) is a heterotetramer composed of 2 large adaptins, a medium adaptin and a small adaptin.

It is found in the golgi apparatus. The protein resides in the cytoplasmic vesicle membrane. Its function is as follows. Part of the AP-3 complex, an adapter-related complex which is not clathrin-associated. The complex is associated with the Golgi region as well as more peripheral structures. It facilitates the budding of vesicles from the Golgi membrane. Involved in vacuolar trafficking and contributes to hyphal growth and pathogenesis. This is Clathrin-associated protein AP-3 complex component APS3 (APS3) from Candida albicans (strain SC5314 / ATCC MYA-2876) (Yeast).